The sequence spans 37 residues: Cytochrome b6-f complex subunit 5 (37 aa).

Residues 5 to 25 (LLSGIVPGLIPITLAGSFVIA) traverse the membrane as a helical segment.

It belongs to the PetG family. The 4 large subunits of the cytochrome b6-f complex are cytochrome b6, subunit IV (17 kDa polypeptide, PetD), cytochrome f and the Rieske protein, while the 4 small subunits are PetG, PetL, PetM and PetN. The complex functions as a dimer.

It is found in the plastid membrane. In terms of biological role, component of the cytochrome b6-f complex, which mediates electron transfer between photosystem II (PSII) and photosystem I (PSI), cyclic electron flow around PSI, and state transitions. PetG is required for either the stability or assembly of the cytochrome b6-f complex. The sequence is that of Cytochrome b6-f complex subunit 5 from Aneura mirabilis (Parasitic liverwort).